Here is a 445-residue protein sequence, read N- to C-terminus: 6-phosphogluconate dehydrogenase, decarboxylating (445 aa).

Residues 1-4 (AVMG), 22-24 (NRS), 63-65 (VKA), and N91 contribute to the NADP(+) site. Substrate-binding positions include N91 and 117–119 (SGG). Catalysis depends on K172, which acts as the Proton acceptor. Residue 175-176 (HN) coordinates substrate. E179 serves as the catalytic Proton donor. Substrate contacts are provided by Y180, K249, R276, R434, and H440.

Belongs to the 6-phosphogluconate dehydrogenase family. In terms of assembly, homodimer.

It catalyses the reaction 6-phospho-D-gluconate + NADP(+) = D-ribulose 5-phosphate + CO2 + NADPH. The protein operates within carbohydrate degradation; pentose phosphate pathway; D-ribulose 5-phosphate from D-glucose 6-phosphate (oxidative stage): step 3/3. Its function is as follows. Catalyzes the oxidative decarboxylation of 6-phosphogluconate to ribulose 5-phosphate and CO(2), with concomitant reduction of NADP to NADPH. This Raoultella planticola (Klebsiella planticola) protein is 6-phosphogluconate dehydrogenase, decarboxylating (gnd).